A 107-amino-acid chain; its full sequence is Nucleoid-associated protein R00231 (107 aa).

It belongs to the YbaB/EbfC family. As to quaternary structure, homodimer.

Its subcellular location is the cytoplasm. It localises to the nucleoid. Functionally, binds to DNA and alters its conformation. May be involved in regulation of gene expression, nucleoid organization and DNA protection. In Rhizobium meliloti (strain 1021) (Ensifer meliloti), this protein is Nucleoid-associated protein R00231.